The primary structure comprises 185 residues: Protein GrpE (185 aa).

A disordered region spans residues 1-44 (MSEEELTNGPGPEPQPEPLEVESAPLEAAPAGEPDKALLEAQQQ).

It belongs to the GrpE family. Homodimer.

The protein resides in the cytoplasm. In terms of biological role, participates actively in the response to hyperosmotic and heat shock by preventing the aggregation of stress-denatured proteins, in association with DnaK and GrpE. It is the nucleotide exchange factor for DnaK and may function as a thermosensor. Unfolded proteins bind initially to DnaJ; upon interaction with the DnaJ-bound protein, DnaK hydrolyzes its bound ATP, resulting in the formation of a stable complex. GrpE releases ADP from DnaK; ATP binding to DnaK triggers the release of the substrate protein, thus completing the reaction cycle. Several rounds of ATP-dependent interactions between DnaJ, DnaK and GrpE are required for fully efficient folding. This Methylococcus capsulatus (strain ATCC 33009 / NCIMB 11132 / Bath) protein is Protein GrpE.